We begin with the raw amino-acid sequence, 288 residues long: Ribosomal RNA small subunit methyltransferase I (288 aa).

Belongs to the methyltransferase superfamily. RsmI family.

The protein resides in the cytoplasm. It catalyses the reaction cytidine(1402) in 16S rRNA + S-adenosyl-L-methionine = 2'-O-methylcytidine(1402) in 16S rRNA + S-adenosyl-L-homocysteine + H(+). Its function is as follows. Catalyzes the 2'-O-methylation of the ribose of cytidine 1402 (C1402) in 16S rRNA. The chain is Ribosomal RNA small subunit methyltransferase I from Vibrio cholerae serotype O1 (strain ATCC 39315 / El Tor Inaba N16961).